Consider the following 457-residue polypeptide: Peptidyl-prolyl cis-trans isomerase FKBP5 (457 aa).

An N-acetylmethionine modification is found at Met1. Over residues 1–11 (MTTDEGAKNNE) the composition is skewed to basic and acidic residues. The tract at residues 1–24 (MTTDEGAKNNEESPTATVAEQGED) is disordered. At Ser13 the chain carries Phosphoserine. Lys28 is subject to N6-acetyllysine. One can recognise a PPIase FKBP-type 1 domain in the interval 42-130 (NGEETPMIGD…KIPSNATLFF (89 aa)). Residue Lys155 is modified to N6-acetyllysine. In terms of domain architecture, PPIase FKBP-type 2 spans 157 to 243 (EGYSNPNEGA…GIEPNAELIY (87 aa)). TPR repeat units follow at residues 268-301 (AAIVKEKGTVYFKGGKYMQAVIQYGKIVSWLEME), 317-350 (LAAFLNLAMCYLKLREYTKAVECCDKALGLDSAN), and 351-384 (EKGLYRRGEAQLLMNEFESAKGDFEKVLEVNPQN). The segment at 420–457 (DAKEEANKAMGKKTSEGVTNEKGTDSQAMEEEKPEGHV) is disordered. Ser445 carries the post-translational modification Phosphoserine.

As to quaternary structure, part of a heteromultimeric cytoplasmic complex with HSP90AA1, HSPA1A/HSPA1B and steroid receptors. Upon ligand binding dissociates from the complex and FKBP4 takes its place. Interacts with functionally mature heterooligomeric progesterone receptor complexes along with HSP90 and TEBP. Interacts with NR3C1. Interacts with Akt/AKT1 and PHLPP1; enhancing dephosphorylation and subsequent activation of Akt/AKT1. Interacts with IFI44L; this interaction modulates the kinase activity of IKBKB and IKBKE. Interacts with IKBKB and IKBKE. In terms of processing, acetylation impairs ability to promote interaction between Akt/AKT1 and PHLPP1. Deacetylation by SIRT7 promotes interaction between Akt/AKT1 and PHLPP1, leading to suppress Akt/AKT1 activation. Post-translationally, ubiquitinated, leading to degradation in a proteasome-dependent manner. Deubiquitinated by USP49, leading to stabilization. As to expression, widely expressed, enriched in testis compared to other tissues.

The protein resides in the cytoplasm. It localises to the nucleus. It catalyses the reaction [protein]-peptidylproline (omega=180) = [protein]-peptidylproline (omega=0). Its activity is regulated as follows. Inhibited by both FK506 and rapamycin. Immunophilin protein with PPIase and co-chaperone activities. Component of unligated steroid receptors heterocomplexes through interaction with heat-shock protein 90 (HSP90). Plays a role in the intracellular trafficking of heterooligomeric forms of steroid hormone receptors maintaining the complex into the cytoplasm when unliganded. Acts as a regulator of Akt/AKT1 activity by promoting the interaction between Akt/AKT1 and PHLPP1, thereby enhancing dephosphorylation and subsequent activation of Akt/AKT1. Interacts with IKBKE and IKBKB which facilitates IKK complex assembly leading to increased IKBKE and IKBKB kinase activity, NF-kappa-B activation, and IFN production. The polypeptide is Peptidyl-prolyl cis-trans isomerase FKBP5 (FKBP5) (Homo sapiens (Human)).